A 234-amino-acid chain; its full sequence is Leucyl/phenylalanyl-tRNA--protein transferase (234 aa).

The protein belongs to the L/F-transferase family.

It localises to the cytoplasm. It catalyses the reaction N-terminal L-lysyl-[protein] + L-leucyl-tRNA(Leu) = N-terminal L-leucyl-L-lysyl-[protein] + tRNA(Leu) + H(+). The catalysed reaction is N-terminal L-arginyl-[protein] + L-leucyl-tRNA(Leu) = N-terminal L-leucyl-L-arginyl-[protein] + tRNA(Leu) + H(+). The enzyme catalyses L-phenylalanyl-tRNA(Phe) + an N-terminal L-alpha-aminoacyl-[protein] = an N-terminal L-phenylalanyl-L-alpha-aminoacyl-[protein] + tRNA(Phe). In terms of biological role, functions in the N-end rule pathway of protein degradation where it conjugates Leu, Phe and, less efficiently, Met from aminoacyl-tRNAs to the N-termini of proteins containing an N-terminal arginine or lysine. The chain is Leucyl/phenylalanyl-tRNA--protein transferase from Shigella sonnei (strain Ss046).